The chain runs to 217 residues: MTGKITTLLFDLDGTLINTNELIIKTFQATLQEFLPDRVFTREDILPFIGPSLMETFREINPAHAEEMRVFYREYNLKHHDDLILEYEGVYEAIRVLYEEDYKLGIVSTKMYDTIMRGLKVTGLDKFFQVVIGLDQVSNAKPDPEGIEMALSLLNATKEEAIMIGDNYHDIEAGKNAETLTAGVAWAIKGPEHLAQFQPDFMLEKMSDLLAIVRDEE.

D11 functions as the Nucleophile in the catalytic mechanism.

This sequence belongs to the HAD-like hydrolase superfamily. PpaX family. The cofactor is Mg(2+).

It carries out the reaction diphosphate + H2O = 2 phosphate + H(+). Hydrolyzes pyrophosphate formed during P-Ser-HPr dephosphorylation by HPrK/P. Might play a role in controlling the intracellular pyrophosphate pool. This Listeria welshimeri serovar 6b (strain ATCC 35897 / DSM 20650 / CCUG 15529 / CIP 8149 / NCTC 11857 / SLCC 5334 / V8) protein is Pyrophosphatase PpaX.